Consider the following 51-residue polypeptide: Large ribosomal subunit protein bL33 (51 aa).

This sequence belongs to the bacterial ribosomal protein bL33 family.

The chain is Large ribosomal subunit protein bL33 from Nitrosospira multiformis (strain ATCC 25196 / NCIMB 11849 / C 71).